The sequence spans 383 residues: ATP phosphoribosyltransferase regulatory subunit (383 aa).

Belongs to the class-II aminoacyl-tRNA synthetase family. HisZ subfamily. Heteromultimer composed of HisG and HisZ subunits.

It localises to the cytoplasm. It participates in amino-acid biosynthesis; L-histidine biosynthesis; L-histidine from 5-phospho-alpha-D-ribose 1-diphosphate: step 1/9. Its function is as follows. Required for the first step of histidine biosynthesis. May allow the feedback regulation of ATP phosphoribosyltransferase activity by histidine. The protein is ATP phosphoribosyltransferase regulatory subunit of Cupriavidus metallidurans (strain ATCC 43123 / DSM 2839 / NBRC 102507 / CH34) (Ralstonia metallidurans).